The following is a 288-amino-acid chain: Acetylglutamate kinase (288 aa).

Residues 73-74, arginine 95, and asparagine 186 each bind substrate; that span reads GG.

It belongs to the acetylglutamate kinase family. ArgB subfamily.

It is found in the cytoplasm. The enzyme catalyses N-acetyl-L-glutamate + ATP = N-acetyl-L-glutamyl 5-phosphate + ADP. Its pathway is amino-acid biosynthesis; L-arginine biosynthesis; N(2)-acetyl-L-ornithine from L-glutamate: step 2/4. Its function is as follows. Catalyzes the ATP-dependent phosphorylation of N-acetyl-L-glutamate. This Pelagibacter ubique (strain HTCC1062) protein is Acetylglutamate kinase.